Here is a 317-residue protein sequence, read N- to C-terminus: Acetyl-coenzyme A carboxylase carboxyl transferase subunit alpha (317 aa).

Residues 39-293 (RLESKAAAAL…EEAIAEGLAG (255 aa)) enclose the CoA carboxyltransferase C-terminal domain.

It belongs to the AccA family. Acetyl-CoA carboxylase is a heterohexamer composed of biotin carboxyl carrier protein (AccB), biotin carboxylase (AccC) and two subunits each of ACCase subunit alpha (AccA) and ACCase subunit beta (AccD).

The protein localises to the cytoplasm. It carries out the reaction N(6)-carboxybiotinyl-L-lysyl-[protein] + acetyl-CoA = N(6)-biotinyl-L-lysyl-[protein] + malonyl-CoA. The protein operates within lipid metabolism; malonyl-CoA biosynthesis; malonyl-CoA from acetyl-CoA: step 1/1. In terms of biological role, component of the acetyl coenzyme A carboxylase (ACC) complex. First, biotin carboxylase catalyzes the carboxylation of biotin on its carrier protein (BCCP) and then the CO(2) group is transferred by the carboxyltransferase to acetyl-CoA to form malonyl-CoA. The protein is Acetyl-coenzyme A carboxylase carboxyl transferase subunit alpha of Methylobacterium sp. (strain 4-46).